The following is a 131-amino-acid chain: MNPTVYLSCLVVFSLFYLGKAQAENDDEFATEKQRLLRVYGDSSVDEATRYRNVDDLVKFYDKYSTLLPLKPDLTQRAQDLVRRYKEESARVVLVDGAPAQGGFWLPLVKLLIVQLGVEIASEGFKRAIES.

A signal peptide spans 1–23 (MNPTVYLSCLVVFSLFYLGKAQA).

It belongs to the Turandot family.

It is found in the secreted. A humoral factor that may play a role in stress tolerance. Requires Mekk1 expression in the fat body to regulate response to septic injury and consequent immune response. This chain is Protein Turandot M, found in Drosophila yakuba (Fruit fly).